A 423-amino-acid chain; its full sequence is Steroid hormone receptor ERR1 (423 aa).

A disordered region spans residues 1-67; it reads MSSQVVGIEP…GAGPGEQGGG (67 aa). The repressor domain stretch occupies residues 1–76; that stretch reads MSSQVVGIEP…GKLVLSSLPK (76 aa). Lys-14 is covalently cross-linked (Glycyl lysine isopeptide (Lys-Gly) (interchain with G-Cter in SUMO)). A phosphoserine mark is found at Ser-19 and Ser-22. The span at 58 to 67 shows a compositional bias: gly residues; that stretch reads GAGPGEQGGG. Positions 76 to 151 form a DNA-binding region, nuclear receptor; it reads KRLCLVCGDV…VGMLKEGVRL (76 aa). NR C4-type zinc fingers lie at residues 79 to 99 and 115 to 134; these read CLVC…CEAC and CPAS…CQAC. N6-acetyllysine; by PCAF/KAT2B occurs at positions 129, 138, 160, and 162. Lys-189 is covalently cross-linked (Glycyl lysine isopeptide (Lys-Gly) (interchain with G-Cter in SUMO2)). The 229-residue stretch at 193–421 folds into the NR LBD domain; sequence PVNALVSHLL…KLFLEMLEAM (229 aa). Lys-403 participates in a covalent cross-link: Glycyl lysine isopeptide (Lys-Gly) (interchain with G-Cter in SUMO); alternate. Lys-403 is covalently cross-linked (Glycyl lysine isopeptide (Lys-Gly) (interchain with G-Cter in SUMO2); alternate). The AF-2 domain stretch occupies residues 403–423; the sequence is KLEGKVPMHKLFLEMLEAMMD.

This sequence belongs to the nuclear hormone receptor family. NR3 subfamily. As to quaternary structure, binds DNA as a monomer or a homodimer. Interacts (via the AF2 domain) with coactivator PPARGC1A (via the L3 motif); the interaction greatly enhances transcriptional activity of genes involved in energy metabolism. Interacts with PIAS4; the interaction enhances sumoylation. Interacts with MAPK15; promotes re-localization of ESRRA to the cytoplasm through a XPO1-dependent mechanism then inhibits ESRRA transcriptional activity. Phosphorylation on Ser-19 enhances sumoylation on Lys-14 increasing repression of transcriptional activity. Post-translationally, sumoylated with SUMO2. Main site is Lys-14 which is enhanced by phosphorylation on Ser-19, cofactor activation, and by interaction with PIAS4. Sumoylation enhances repression of transcriptional activity, but has no effect on subcellular location nor on DNA binding. In terms of processing, reversibly acetylated. Acetylation by PCAF/KAT2 at Lys-129, Lys-138, Lys-160 and Lys-162 and PCAF/KAT2 decreases transcriptional activity probably by inhibiting DNA-binding activity; deacetylation involves SIRT1 and HDAC8 and increases DNA-binding.

It localises to the nucleus. The protein localises to the cytoplasm. In terms of biological role, binds to an ERR-alpha response element (ERRE) containing a single consensus half-site, 5'-TNAAGGTCA-3'. Can bind to the medium-chain acyl coenzyme A dehydrogenase (MCAD) response element NRRE-1 and may act as an important regulator of MCAD promoter. Binds to the C1 region of the lactoferrin gene promoter. Requires dimerization and the coactivator, PGC-1A, for full activity. The ERRalpha/PGC1alpha complex is a regulator of energy metabolism. Induces the expression of PERM1 in the skeletal muscle. The polypeptide is Steroid hormone receptor ERR1 (ESRRA) (Homo sapiens (Human)).